A 189-amino-acid polypeptide reads, in one-letter code: Ribonuclease M5 2 (189 aa).

The region spanning 8–91 (SQVIVAEGRD…VFLKRDEAVP (84 aa)) is the Toprim domain. Residues E14, D60, and D62 each coordinate Mg(2+).

This sequence belongs to the ribonuclease M5 family. It depends on Mg(2+) as a cofactor.

It localises to the cytoplasm. The catalysed reaction is Endonucleolytic cleavage of RNA, removing 21 and 42 nucleotides, respectively, from the 5'- and 3'-termini of a 5S-rRNA precursor.. In terms of biological role, required for correct processing of both the 5' and 3' ends of 5S rRNA precursor. Cleaves both sides of a double-stranded region yielding mature 5S rRNA in one step. The polypeptide is Ribonuclease M5 2 (Ligilactobacillus salivarius (strain UCC118) (Lactobacillus salivarius)).